A 378-amino-acid polypeptide reads, in one-letter code: Cobalt-precorrin-5B C(1)-methyltransferase (378 aa).

The protein belongs to the CbiD family.

The enzyme catalyses Co-precorrin-5B + S-adenosyl-L-methionine = Co-precorrin-6A + S-adenosyl-L-homocysteine. It functions in the pathway cofactor biosynthesis; adenosylcobalamin biosynthesis; cob(II)yrinate a,c-diamide from sirohydrochlorin (anaerobic route): step 6/10. In terms of biological role, catalyzes the methylation of C-1 in cobalt-precorrin-5B to form cobalt-precorrin-6A. In Synechocystis sp. (strain ATCC 27184 / PCC 6803 / Kazusa), this protein is Cobalt-precorrin-5B C(1)-methyltransferase.